The following is a 338-amino-acid chain: Phenylalanine--tRNA ligase alpha subunit (338 aa).

Position 253 (Glu253) interacts with Mg(2+).

Belongs to the class-II aminoacyl-tRNA synthetase family. Phe-tRNA synthetase alpha subunit type 1 subfamily. In terms of assembly, tetramer of two alpha and two beta subunits. It depends on Mg(2+) as a cofactor.

It is found in the cytoplasm. The enzyme catalyses tRNA(Phe) + L-phenylalanine + ATP = L-phenylalanyl-tRNA(Phe) + AMP + diphosphate + H(+). This chain is Phenylalanine--tRNA ligase alpha subunit, found in Citrifermentans bemidjiense (strain ATCC BAA-1014 / DSM 16622 / JCM 12645 / Bem) (Geobacter bemidjiensis).